The sequence spans 155 residues: MSRRGTVEEKTAKSDPIYRNRLVNMLVNRILKHGKKSLAYQIIYRAVKKIQQKTETNPLSVLRQAIRGVTPDIAVKARRVGGSTHQVPIEIGSTQGKALAIRWLLGAARKRPGRNMAFKLSSELVDAAKGSGDAIRKKEETHRMAEANRAFAHFR.

It belongs to the universal ribosomal protein uS7 family. In terms of assembly, part of the 30S ribosomal subunit.

Its subcellular location is the plastid. It is found in the chloroplast. In terms of biological role, one of the primary rRNA binding proteins, it binds directly to 16S rRNA where it nucleates assembly of the head domain of the 30S subunit. The polypeptide is Small ribosomal subunit protein uS7c (rps7) (Silene latifolia (White campion)).